The primary structure comprises 171 residues: Ribosome maturation factor RimM (171 aa).

A PRC barrel domain is found at 97–170 (KLNYFSWDHY…IIYMKLPVGL (74 aa)).

Belongs to the RimM family. As to quaternary structure, binds ribosomal protein uS19.

The protein resides in the cytoplasm. Its function is as follows. An accessory protein needed during the final step in the assembly of 30S ribosomal subunit, possibly for assembly of the head region. Essential for efficient processing of 16S rRNA. May be needed both before and after RbfA during the maturation of 16S rRNA. It has affinity for free ribosomal 30S subunits but not for 70S ribosomes. The sequence is that of Ribosome maturation factor RimM from Azobacteroides pseudotrichonymphae genomovar. CFP2.